The sequence spans 209 residues: Uracil phosphoribosyltransferase (209 aa).

5-phospho-alpha-D-ribose 1-diphosphate-binding positions include arginine 79, arginine 104, and aspartate 131–threonine 139. Uracil-binding positions include isoleucine 194 and glycine 199 to alanine 201. Aspartate 200 contributes to the 5-phospho-alpha-D-ribose 1-diphosphate binding site.

The protein belongs to the UPRTase family. Mg(2+) is required as a cofactor.

The catalysed reaction is UMP + diphosphate = 5-phospho-alpha-D-ribose 1-diphosphate + uracil. The protein operates within pyrimidine metabolism; UMP biosynthesis via salvage pathway; UMP from uracil: step 1/1. With respect to regulation, allosterically activated by GTP. In terms of biological role, catalyzes the conversion of uracil and 5-phospho-alpha-D-ribose 1-diphosphate (PRPP) to UMP and diphosphate. This Pseudoalteromonas atlantica (strain T6c / ATCC BAA-1087) protein is Uracil phosphoribosyltransferase.